The primary structure comprises 139 residues: Probable transcription termination protein NusA (139 aa).

The 67-residue stretch at 31–97 (DDRVVYVVTA…YNVTVSENDT (67 aa)) folds into the KH domain.

The protein belongs to the NusA family.

The protein localises to the cytoplasm. Participates in transcription termination. The polypeptide is Probable transcription termination protein NusA (Halobacterium salinarum (strain ATCC 29341 / DSM 671 / R1)).